A 137-amino-acid polypeptide reads, in one-letter code: Large ribosomal subunit protein uL13 (137 aa).

It belongs to the universal ribosomal protein uL13 family. As to quaternary structure, part of the 50S ribosomal subunit.

In terms of biological role, this protein is one of the early assembly proteins of the 50S ribosomal subunit, although it is not seen to bind rRNA by itself. It is important during the early stages of 50S assembly. The chain is Large ribosomal subunit protein uL13 from Methanococcus maripaludis (strain DSM 14266 / JCM 13030 / NBRC 101832 / S2 / LL).